A 365-amino-acid chain; its full sequence is ADP-ribosylhydrolase ARH3 (365 aa).

Mg(2+) is bound by residues E42, T77, D78, and D79. D78 is a binding site for substrate. Residues 147-153 (KGSYGNG), H183, L236, and I272 contribute to the substrate site. Residues D315, D317, and T318 each contribute to the Mg(2+) site.

This sequence belongs to the ADP-ribosylglycohydrolase family. Monomer. The cofactor is Mg(2+).

Its subcellular location is the nucleus. The protein resides in the cytoplasm. It is found in the chromosome. It localises to the mitochondrion matrix. It carries out the reaction [(1''-&gt;2')-ADP-alpha-D-ribose](n) + H2O = [(1''-&gt;2')-ADP-alpha-D-ribose](n-1) + ADP-D-ribose. It catalyses the reaction 1''-O-acetyl-ADP-alpha-D-ribose + H2O = ADP-D-ribose + acetate + H(+). The enzyme catalyses O-(ADP-D-ribosyl)-L-seryl-[protein] + H2O = ADP-D-ribose + L-seryl-[protein]. The catalysed reaction is alpha-NAD(+) + H2O = ADP-D-ribose + nicotinamide + H(+). Its activity is regulated as follows. The protein undergoes a dramatic conformational switch from closed to open states upon substrate-binding, which enables specific substrate recognition for the 1''-O-linkage. The glutamate flap (Glu-42) blocks substrate entrance to Mg(2+) in the unliganded closed state. In presence of substrate, Glu-42 is ejected from the active site: this closed-to-open transition significantly widens the substrate-binding channel and precisely positions the scissile 1''-O-linkage for cleavage while securing tightly 2'- and 3'-hydroxyls of ADP-ribose. Its function is as follows. ADP-ribosylhydrolase that preferentially hydrolyzes the scissile alpha-O-linkage attached to the anomeric C1'' position of ADP-ribose and acts on different substrates, such as proteins ADP-ribosylated on serine and threonine, free poly(ADP-ribose) and O-acetyl-ADP-D-ribose. Specifically acts as a serine mono-ADP-ribosylhydrolase by mediating the removal of mono-ADP-ribose attached to serine residues on proteins, thereby playing a key role in DNA damage response. Serine ADP-ribosylation of proteins constitutes the primary form of ADP-ribosylation of proteins in response to DNA damage. Does not hydrolyze ADP-ribosyl-arginine, -cysteine, -diphthamide, or -asparagine bonds. Also able to degrade protein free poly(ADP-ribose), which is synthesized in response to DNA damage: free poly(ADP-ribose) acts as a potent cell death signal and its degradation by ADPRHL2 protects cells from poly(ADP-ribose)-dependent cell death, a process named parthanatos. Also hydrolyzes free poly(ADP-ribose) in mitochondria. Specifically digests O-acetyl-ADP-D-ribose, a product of deacetylation reactions catalyzed by sirtuins. Specifically degrades 1''-O-acetyl-ADP-D-ribose isomer, rather than 2''-O-acetyl-ADP-D-ribose or 3''-O-acetyl-ADP-D-ribose isomers. This chain is ADP-ribosylhydrolase ARH3 (ADPRS), found in Bos taurus (Bovine).